The primary structure comprises 415 residues: Casein kinase I isoform delta (415 aa).

Positions 9–277 constitute a Protein kinase domain; that stretch reads YRLGRKIGSG…YLRQLFRNLF (269 aa). Residues 15–23 and lysine 38 contribute to the ATP site; that span reads IGSGSFGDI. The Proton acceptor role is filled by aspartate 128. The span at 301 to 315 shows a compositional bias: basic and acidic residues; that stretch reads AEDAERERREREERL. Residues 301 to 415 are disordered; it reads AEDAERERRE…SSGLPSTVHR (115 aa). The segment at 317–342 is autoinhibitory; it reads HTRNPAVRGLPSTASGRLRGTQEVTP. Low complexity predominate over residues 341–352; it reads TPSTPLTPTSHT. The span at 380 to 415 shows a compositional bias: polar residues; that stretch reads NVSSSDLTSRQDTSRMSTSQIPSRVTSSGLPSTVHR.

The protein belongs to the protein kinase superfamily. Monomer. Interacts with per1 and per2. Component of the circadian core oscillator. In terms of processing, autophosphorylated on serine and threonine residues. In terms of tissue distribution, detected in retina photoreceptor cells.

It is found in the cytoplasm. Its subcellular location is the nucleus. It catalyses the reaction L-seryl-[protein] + ATP = O-phospho-L-seryl-[protein] + ADP + H(+). The catalysed reaction is L-threonyl-[protein] + ATP = O-phospho-L-threonyl-[protein] + ADP + H(+). It carries out the reaction L-seryl-[tau protein] + ATP = O-phospho-L-seryl-[tau protein] + ADP + H(+). The enzyme catalyses L-threonyl-[tau protein] + ATP = O-phospho-L-threonyl-[tau protein] + ADP + H(+). Exhibits substrate-dependent heparin activation. Functionally, casein kinases are operationally defined by their preferential utilization of acidic proteins such as caseins as substrates. Can phosphorylate a large number of proteins. Central component of the circadian clock. May act as a negative regulator of circadian rhythmicity by phosphorylating per1 and per2, which may lead to their degradation. Participates in wnt signaling. Has no kinase activity. The chain is Casein kinase I isoform delta (csnk1d) from Xenopus laevis (African clawed frog).